A 330-amino-acid polypeptide reads, in one-letter code: tRNA uridine(34) hydroxylase (330 aa).

Positions 123–217 constitute a Rhodanese domain; the sequence is SDPEVILVDT…YLEEVKQEES (95 aa). The active-site Cysteine persulfide intermediate is C177.

This sequence belongs to the TrhO family.

It carries out the reaction uridine(34) in tRNA + AH2 + O2 = 5-hydroxyuridine(34) in tRNA + A + H2O. In terms of biological role, catalyzes oxygen-dependent 5-hydroxyuridine (ho5U) modification at position 34 in tRNAs. The sequence is that of tRNA uridine(34) hydroxylase from Shewanella sp. (strain ANA-3).